A 342-amino-acid chain; its full sequence is Isopentenyl-diphosphate delta-isomerase (342 aa).

11 to 12 (RK) contributes to the substrate binding site. Residues Ser-68, 69–71 (SMT), Ser-99, and Asn-127 each bind FMN. 99–101 (SMR) lines the substrate pocket. Gln-162 contributes to the substrate binding site. Glu-163 lines the Mg(2+) pocket. FMN contacts are provided by residues Lys-194, Thr-224, 274 to 276 (GFK), and 295 to 296 (AG).

It belongs to the IPP isomerase type 2 family. Homooctamer. Dimer of tetramers. The cofactor is FMN. NADPH is required as a cofactor. Mg(2+) serves as cofactor.

It localises to the cytoplasm. The catalysed reaction is isopentenyl diphosphate = dimethylallyl diphosphate. Its function is as follows. Involved in the biosynthesis of isoprenoids. Catalyzes the 1,3-allylic rearrangement of the homoallylic substrate isopentenyl (IPP) to its allylic isomer, dimethylallyl diphosphate (DMAPP). The polypeptide is Isopentenyl-diphosphate delta-isomerase (Rickettsia conorii (strain ATCC VR-613 / Malish 7)).